Consider the following 1341-residue polypeptide: Subtilisin-like protease 2 (1341 aa).

Positions 1-18 are cleaved as a signal peptide; the sequence is MLNIIYVVSLILIKFIFY. A propeptide spans 19 to 686 (inhibition peptide); it reads KECNNNNNYY…KLYNNKYSFL (668 aa). Disordered stretches follow at residues 85–107 and 143–171; these read EKKT…EKKK and ADVS…NYKN. N165, N343, N449, N453, and N492 each carry an N-linked (GlcNAc...) asparagine glycan. The disordered stretch occupies residues 415–474; it reads KKSKKEKENTQQKGGNNPNVDINILNNNNNNNNNNNSNNNSNSMNDEEINYNNNNNNKES. The span at 430 to 474 shows a compositional bias: low complexity; sequence NNPNVDINILNNNNNNNNNNNSNNNSNSMNDEEINYNNNNNNKES. Residues 499-530 are disordered; that stretch reads IYHNKNDNSYKNKKEGTGKNNDNNDPNNNNNK. Over residues 502–515 the composition is skewed to basic and acidic residues; it reads NKNDNSYKNKKEGT. The segment covering 517-530 has biased composition (low complexity); that stretch reads KNNDNNDPNNNNNK. N550, N641, and N728 each carry an N-linked (GlcNAc...) asparagine glycan. Residues 687–1136 are Extracellular-facing; that stretch reads NKFLNIEPLI…LYNLYEYDSH (450 aa). In terms of domain architecture, Peptidase S8 spans 726–1019; the sequence is TWNLSIIRVF…DSLVNAEGAV (294 aa). Residues D754 and H797 each act as charge relay system in the active site. 4 N-linked (GlcNAc...) asparagine glycosylation sites follow: N820, N856, N892, and N950. Residue S960 is the Charge relay system of the active site. N-linked (GlcNAc...) asparagine glycosylation is found at N1009 and N1105. The helical transmembrane segment at 1137 to 1157 threads the bilayer; the sequence is YLLASVILFFLALLSIFVGMI. Topologically, residues 1158–1341 are cytoplasmic; it reads YMKSRKHSDK…MNQLDDMFMK (184 aa).

This sequence belongs to the peptidase S8 family. Post-translationally, proteolytically cleaved at the N-terminus to generate a 74kDa intermediate which is further processed into a 72kDa form. The first maturation cleavage is autocatalytic, occurs in the ER and is necessary for the subsequent SUB2 trafficking to the microneme. The second cleavage may be mediated by PMX/plasmepsin X.

It is found in the cell membrane. Its subcellular location is the cytoplasmic vesicle. The protein localises to the secretory vesicle. It localises to the microneme membrane. The enzyme catalyses Hydrolysis of proteins with broad specificity for peptide bonds, and a preference for a large uncharged residue in P1. Hydrolyzes peptide amides.. Its activity is regulated as follows. Activation may be calcium-dependent. Inhibited by the non-covalent interaction with the cleaved propeptide. In terms of biological role, serine protease which plays an essential role in the shedding of AMA1, MSP1 and MSP7 from the surface of the invading merozoite; this step is essential for productive invasion and the release of the adhesion between the erythrocyte and the merozoite. May cleave TRAMP/PTTRAMP, thereby shedding TRAMP from the merozoite surface during erythrocyte invasion. This Plasmodium falciparum (isolate 3D7) protein is Subtilisin-like protease 2.